A 366-amino-acid chain; its full sequence is C-X-C chemokine receptor type 3 (366 aa).

Topologically, residues 1 to 55 are extracellular; the sequence is MVPEMSERQEFQASDFAYLLENSSYDYGENETYFCCTSPPCPQDFSLNFDRTFLP. An N-linked (GlcNAc...) asparagine glycan is attached at Asn-22. Sulfotyrosine occurs at positions 25 and 27. N-linked (GlcNAc...) asparagine glycosylation is present at Asn-30. Residues 56–76 form a helical membrane-spanning segment; it reads VLYSLLFVLGLLGNGIVAVVL. Topologically, residues 77–88 are cytoplasmic; sequence LSQRAALSSTDT. The helical transmembrane segment at 89-109 threads the bilayer; it reads FLLHLAVADALLVLTLPLWAV. The Extracellular segment spans residues 110 to 124; the sequence is DAAIQWVFGSGLCKV. Cys-122 and Cys-201 form a disulfide bridge. The helical transmembrane segment at 125 to 145 threads the bilayer; sequence AGALFNINFYAGALLLACISF. Over 146 to 167 the chain is Cytoplasmic; it reads DRYLSIVHATQLYRRGPPTRVA. The helical transmembrane segment at 168–188 threads the bilayer; the sequence is LTCVAVWGLCLLFALPDFIFL. Residues 189-221 lie on the Extracellular side of the membrane; sequence SSHHDNRLNATHCQYNFPQEGHTALRILQLVAG. N-linked (GlcNAc...) asparagine glycosylation is present at Asn-197. The chain crosses the membrane as a helical span at residues 222-242; that stretch reads FLLPLLVMAYCYARILAVLLV. The Cytoplasmic portion of the chain corresponds to 243 to 254; that stretch reads SRGQRRLRAMRL. Residues 255–275 traverse the membrane as a helical segment; it reads VVVVVVAFALCWTPYHLVVLV. At 276–299 the chain is on the extracellular side; it reads DTLMDLGALARNCGRESSVDIAKS. A helical transmembrane segment spans residues 300-320; it reads VTSGMGYMHCCLNPLLYAFVG. At 321–366 the chain is on the cytoplasmic side; the sequence is VKFRERMWVLLVRLGCPDQRCHQRQPSASRRESSWSETTEASYSGL. Residues 341–366 are disordered; sequence CHQRQPSASRRESSWSETTEASYSGL. Low complexity predominate over residues 355 to 366; sequence WSETTEASYSGL.

The protein belongs to the G-protein coupled receptor 1 family. As to quaternary structure, homomer. Forms heteromers with ACKR4. Interacts with PF4/CXCL4. In terms of processing, sulfation on Tyr-25 and Tyr-27 is essential for CXCL10 binding. Post-translationally, N-glycosylated.

The protein resides in the cell membrane. Its function is as follows. Receptor for the C-X-C chemokine CXCL9, CXCL10 and CXCL11 and mediates the proliferation, survival and angiogenic activity of mesangial cells through a heterotrimeric G-protein signaling pathway. Probably promotes cell chemotaxis response. Binds to CCL21. Upon activation by PF4, induces activated T-lymphocytes migration mediated via downstream Ras/extracellular signal-regulated kinase (ERK) signaling. This chain is C-X-C chemokine receptor type 3 (CXCR3), found in Bos taurus (Bovine).